A 236-amino-acid chain; its full sequence is 2-C-methyl-D-erythritol 4-phosphate cytidylyltransferase (236 aa).

It belongs to the IspD/TarI cytidylyltransferase family. IspD subfamily.

It carries out the reaction 2-C-methyl-D-erythritol 4-phosphate + CTP + H(+) = 4-CDP-2-C-methyl-D-erythritol + diphosphate. It functions in the pathway isoprenoid biosynthesis; isopentenyl diphosphate biosynthesis via DXP pathway; isopentenyl diphosphate from 1-deoxy-D-xylulose 5-phosphate: step 2/6. In terms of biological role, catalyzes the formation of 4-diphosphocytidyl-2-C-methyl-D-erythritol from CTP and 2-C-methyl-D-erythritol 4-phosphate (MEP). This chain is 2-C-methyl-D-erythritol 4-phosphate cytidylyltransferase, found in Pseudomonas syringae pv. tomato (strain ATCC BAA-871 / DC3000).